The primary structure comprises 125 residues: Small ribosomal subunit protein uS12 (125 aa).

Residues M1–C27 are disordered. At D89 the chain carries 3-methylthioaspartic acid. The interval D103–K125 is disordered. The span at N111–K125 shows a compositional bias: basic residues.

This sequence belongs to the universal ribosomal protein uS12 family. As to quaternary structure, part of the 30S ribosomal subunit. Contacts proteins S8 and S17. May interact with IF1 in the 30S initiation complex.

Functionally, with S4 and S5 plays an important role in translational accuracy. Interacts with and stabilizes bases of the 16S rRNA that are involved in tRNA selection in the A site and with the mRNA backbone. Located at the interface of the 30S and 50S subunits, it traverses the body of the 30S subunit contacting proteins on the other side and probably holding the rRNA structure together. The combined cluster of proteins S8, S12 and S17 appears to hold together the shoulder and platform of the 30S subunit. This chain is Small ribosomal subunit protein uS12, found in Syntrophomonas wolfei subsp. wolfei (strain DSM 2245B / Goettingen).